The chain runs to 429 residues: Histidine--tRNA ligase (429 aa).

It belongs to the class-II aminoacyl-tRNA synthetase family. Homodimer.

It is found in the cytoplasm. It carries out the reaction tRNA(His) + L-histidine + ATP = L-histidyl-tRNA(His) + AMP + diphosphate + H(+). This is Histidine--tRNA ligase from Pseudomonas putida (strain W619).